A 476-amino-acid polypeptide reads, in one-letter code: uncharacterized protein (476 aa).

Residues 147-204 are a coiled coil; sequence DVRLAELRRRRAELEAEIAAVEAGDIAVLDPTAVRDRYQQLSTTARELLSDFREVEEN.

This is an uncharacterized protein from Mycolicibacterium smegmatis (strain ATCC 700084 / mc(2)155) (Mycobacterium smegmatis).